The chain runs to 245 residues: tRNA pseudouridine synthase A (245 aa).

D52 functions as the Nucleophile in the catalytic mechanism. Y111 is a substrate binding site.

Belongs to the tRNA pseudouridine synthase TruA family. Homodimer.

The enzyme catalyses uridine(38/39/40) in tRNA = pseudouridine(38/39/40) in tRNA. In terms of biological role, formation of pseudouridine at positions 38, 39 and 40 in the anticodon stem and loop of transfer RNAs. In Wolbachia pipientis subsp. Culex pipiens (strain wPip), this protein is tRNA pseudouridine synthase A.